Here is a 398-residue protein sequence, read N- to C-terminus: Cysteine desulfurase 2 (398 aa).

Pyridoxal 5'-phosphate-binding positions include 71 to 72, asparagine 150, glutamine 178, and 198 to 200; these read GT and SGH. N6-(pyridoxal phosphate)lysine is present on lysine 201. Threonine 236 lines the pyridoxal 5'-phosphate pocket. The active-site Cysteine persulfide intermediate is cysteine 323. Cysteine 323 serves as a coordination point for [2Fe-2S] cluster.

Belongs to the class-V pyridoxal-phosphate-dependent aminotransferase family. NifS/IscS subfamily. As to quaternary structure, homodimer. Requires pyridoxal 5'-phosphate as cofactor.

The catalysed reaction is (sulfur carrier)-H + L-cysteine = (sulfur carrier)-SH + L-alanine. Functionally, catalyzes the removal of elemental sulfur atoms from cysteine to produce alanine. Seems to participate in the biosynthesis of the nitrogenase metalloclusters by providing the inorganic sulfur required for the Fe-S core formation. This Trichormus variabilis (strain ATCC 29413 / PCC 7937) (Anabaena variabilis) protein is Cysteine desulfurase 2.